The sequence spans 402 residues: Ubiquitin-like modifier-activating enzyme 5 (402 aa).

Residues G81, D102, K125, N148, and N182 each contribute to the ATP site. C224 and C227 together coordinate Zn(2+). The Glycyl thioester intermediate role is filled by C248. Residues C301 and C306 each coordinate Zn(2+). The interval 369-402 (EAPEKSSETSEETVTTAPPDDASLEDLMAQMKSM) is disordered.

This sequence belongs to the ubiquitin-activating E1 family. UBA5 subfamily.

In terms of biological role, E1-like enzyme which activates UFM1. This is Ubiquitin-like modifier-activating enzyme 5 from Drosophila erecta (Fruit fly).